We begin with the raw amino-acid sequence, 549 residues long: Myotubularin-related protein 9 (549 aa).

M1 carries the N-acetylmethionine modification. Residues 4 to 99 (AELIKTPRVD…LNIASSIEAL (96 aa)) form the GRAM domain. The Myotubularin phosphatase domain maps to 123–498 (GWHSFLPEQE…QSLQLWEGIF (376 aa)). Positions 508–542 (LDEAYEEMVNIIEYNKELQAKVNLLRRQLAELETE) form a coiled coil. At S548 the chain carries Phosphoserine.

This sequence belongs to the protein-tyrosine phosphatase family. Non-receptor class myotubularin subfamily. Homodimer. Heterodimer (via C-terminus) with lipid phosphatase MTMR6 (via C-terminus). Heterodimer (via coiled coil domain) with lipid phosphatase MTMR7 (via C-terminus). Heterodimer with lipid phosphatase MTMR8.

The protein localises to the cytoplasm. The protein resides in the cell projection. It is found in the ruffle membrane. Its subcellular location is the perinuclear region. It localises to the endoplasmic reticulum. Functionally, acts as an adapter for myotubularin-related phosphatases. Increases lipid phosphatase MTMR6 catalytic activity, specifically towards phosphatidylinositol 3,5-bisphosphate, and MTMR6 binding affinity for phosphorylated phosphatidylinositols. Positively regulates lipid phosphatase MTMR7 catalytic activity. Increases MTMR8 catalytic activity towards phosphatidylinositol 3-phosphate. The formation of the MTMR6-MTMR9 complex, stabilizes both MTMR6 and MTMR9 protein levels. Stabilizes MTMR8 protein levels. Plays a role in the late stages of macropinocytosis possibly by regulating MTMR6-mediated dephosphorylation of phosphatidylinositol 3-phosphate in membrane ruffles. Negatively regulates autophagy, in part via its association with MTMR8. Negatively regulates DNA damage-induced apoptosis, in part via its association with MTMR6. Does not bind mono-, di- and tri-phosphorylated phosphatidylinositols, phosphatidic acid and phosphatidylserine. The chain is Myotubularin-related protein 9 (MTMR9) from Bos taurus (Bovine).